A 507-amino-acid chain; its full sequence is MTSTATSGESAVRTYQVRTYGCQMNVHDSERVSGLLDAAGYVKAPEGTDADIVIFNTCAVRENADNKLYGNISHLAPRKAANPNMQIAVGGCLAQKDREGMLAKAPWVDVVFGTHNIGSLPALLERARHNNEAQVEIVEALEHFPSALPATRESAYAAWVSISVGCNNTCTFCIVPSLRGKEIDRRPGDILGEVQALVDQGVLEVTLLGQNVNAYGVNFADPEIPRDRGAFAELLRACGRIDGLERVRFTSPHPAEFTDDVIEAMAQTPNVCPQLHMPLQSGSDRILKAMRRSYRSERFLSIIDKVRSAMPDAAITTDIIVGFPGETEEDFQQTLEVVRRARFSSAFTFQYSIRPGTPAAKLPDQLPKAVVQERYDRLIALQESVTLEENQKQIGRMIEVLIATGEGRKDGETARMSGRARDGRLVHFRPQGHVDGALRPGDIITVDVTGAAPHHLIADDGVRSHRRTRAGDAHEAGKKPSTPGIGLGMPAIGAPKTERIEVAGCGL.

The region spanning 13–129 (RTYQVRTYGC…LPALLERARH (117 aa)) is the MTTase N-terminal domain. Cys22, Cys58, Cys92, Cys166, Cys170, and Cys173 together coordinate [4Fe-4S] cluster. The region spanning 152-388 (RESAYAAWVS…IALQESVTLE (237 aa)) is the Radical SAM core domain. Residues 391–462 (QKQIGRMIEV…PHHLIADDGV (72 aa)) form the TRAM domain. Residues 459 to 478 (DDGVRSHRRTRAGDAHEAGK) are compositionally biased toward basic and acidic residues. The disordered stretch occupies residues 459–492 (DDGVRSHRRTRAGDAHEAGKKPSTPGIGLGMPAI).

This sequence belongs to the methylthiotransferase family. MiaB subfamily. Monomer. [4Fe-4S] cluster serves as cofactor.

It is found in the cytoplasm. It catalyses the reaction N(6)-dimethylallyladenosine(37) in tRNA + (sulfur carrier)-SH + AH2 + 2 S-adenosyl-L-methionine = 2-methylsulfanyl-N(6)-dimethylallyladenosine(37) in tRNA + (sulfur carrier)-H + 5'-deoxyadenosine + L-methionine + A + S-adenosyl-L-homocysteine + 2 H(+). In terms of biological role, catalyzes the methylthiolation of N6-(dimethylallyl)adenosine (i(6)A), leading to the formation of 2-methylthio-N6-(dimethylallyl)adenosine (ms(2)i(6)A) at position 37 in tRNAs that read codons beginning with uridine. The sequence is that of tRNA-2-methylthio-N(6)-dimethylallyladenosine synthase from Mycobacteroides abscessus (strain ATCC 19977 / DSM 44196 / CCUG 20993 / CIP 104536 / JCM 13569 / NCTC 13031 / TMC 1543 / L948) (Mycobacterium abscessus).